The chain runs to 199 residues: NAD(P)H dehydrogenase (quinone) (199 aa).

Residues 4–190 form the Flavodoxin-like domain; that stretch reads VLVLYYSAYG…DAARFQGAHV (187 aa). FMN contacts are provided by residues 10–15 and 78–80; these read SAYGHI and TRY. NAD(+) is bound at residue tyrosine 12. Residue tryptophan 98 participates in substrate binding. Residues 113-119 and histidine 134 each bind FMN; that span reads SSATQHG.

Belongs to the WrbA family. Requires FMN as cofactor.

It catalyses the reaction a quinone + NADH + H(+) = a quinol + NAD(+). The enzyme catalyses a quinone + NADPH + H(+) = a quinol + NADP(+). The sequence is that of NAD(P)H dehydrogenase (quinone) from Sinorhizobium fredii (strain NBRC 101917 / NGR234).